The following is a 788-amino-acid chain: ATP-dependent 6-phosphofructokinase, platelet type (788 aa).

At M1 the chain carries N-acetylmethionine. The segment at 1 to 399 (MSDQDSSTSS…NLNTYKRLAI (399 aa)) is N-terminal catalytic PFK domain 1. S2, S6, S12, and S21 each carry phosphoserine. ATP is bound by residues G34, 97–98 (RC), and 127–130 (GDGS). D128 is a Mg(2+) binding site. Phosphoserine is present on S142. Substrate contacts are provided by residues 173 to 175 (SID), R210, 217 to 219 (MGR), E273, R301, and 307 to 310 (HVQR). D175 acts as the Proton acceptor in catalysis. S386 is modified (phosphoserine). N6-acetyllysine is present on K395. Residues 400–411 (KEPDDKIPKSNC) form an interdomain linker region. The C-terminal regulatory PFK domain 2 stretch occupies residues 412–788 (NVAIINVGAP…VHNHGELSAI (377 aa)). R481 contacts beta-D-fructose 2,6-bisphosphate. K486 bears the N6-acetyllysine mark. Beta-D-fructose 2,6-bisphosphate-binding positions include 538 to 542 (TVSNN), R576, 583 to 585 (MGG), and E639. A glycan (O-linked (GlcNAc) serine) is linked at S540. A Phosphotyrosine modification is found at Y651. Beta-D-fructose 2,6-bisphosphate contacts are provided by residues R665 and 671–674 (HMQQ). At K688 the chain carries N6-acetyllysine. Residue R744 participates in beta-D-fructose 2,6-bisphosphate binding.

The protein belongs to the phosphofructokinase type A (PFKA) family. ATP-dependent PFK group I subfamily. Eukaryotic two domain clade 'E' sub-subfamily. In terms of assembly, homo- and heterotetramers. Phosphofructokinase (PFK) enzyme functions as a tetramer composed of different combinations of 3 types of subunits, called PFKM (M), PFKL (L) and PFKP (P). The composition of the PFK tetramer differs according to the tissue type it is present in. The kinetic and regulatory properties of the tetrameric enzyme are dependent on the subunit composition, hence can vary across tissues. Interacts with ATG4B; promoting phosphorylation of ATG4B. Requires Mg(2+) as cofactor. GlcNAcylation decreases enzyme activity. Post-translationally, phosphorylation at Ser-386 promotes interaction with ATG4B. As to expression, expressed at high level in neuroendocrine tissues.

It is found in the cytoplasm. It carries out the reaction beta-D-fructose 6-phosphate + ATP = beta-D-fructose 1,6-bisphosphate + ADP + H(+). The protein operates within carbohydrate degradation; glycolysis; D-glyceraldehyde 3-phosphate and glycerone phosphate from D-glucose: step 3/4. With respect to regulation, allosterically activated by ADP, AMP, or fructose 2,6-bisphosphate, and allosterically inhibited by ATP or citrate. In terms of biological role, catalyzes the phosphorylation of D-fructose 6-phosphate to fructose 1,6-bisphosphate by ATP, the first committing step of glycolysis. This chain is ATP-dependent 6-phosphofructokinase, platelet type (Pfkp), found in Rattus norvegicus (Rat).